The following is a 317-amino-acid chain: MATDARGVVAITGATGFLGRHLVRALAQDGWRPRVLVRRDPVHPFWRDLEVEVVTGDLGTPRALDRLAKGAEVFIHVAGLIKARTLEGFNRVNQDGARAAAEAARAAGARFILVSSLAAREPSLSNYAASKRAGEDAVRAADPSALIVRPPAIYGPGDTETLGLFQLAARSPVLPVLSQTSRVAMIHVEDAAAKLVAFCRTPVLGLVELSDVRRDGYTWTEIMRGAAHVMGAKPRLIRLPDPGILTAGALVDAWSSLTNTPSVFGLGKARELLHTDWTPSSAPMAEGVPSKFGLIDGFTHTVDWYRAAGWLPKNIVA.

A signal peptide spans 1 to 27; that stretch reads MATDARGVVAITGATGFLGRHLVRALA.

This sequence belongs to the NAD(P)-dependent epimerase/dehydratase family.

The protein resides in the periplasm. It carries out the reaction N-acyl-3-oxosphinganine + NADH + H(+) = an N-acylsphinganine + NAD(+). It functions in the pathway lipid metabolism; sphingolipid metabolism. In terms of biological role, involved in de novo bacterial ceramide synthesis. Catalyzes the reduction of bacterial oxidized ceramides to bacterial dihydroceramides. This is Ceramide reductase from Caulobacter vibrioides (strain NA1000 / CB15N) (Caulobacter crescentus).